A 1000-amino-acid polypeptide reads, in one-letter code: DENN domain-containing protein 2A (1000 aa).

4 disordered regions span residues 1-155, 174-328, 427-464, and 491-525; these read MLEA…LRFQ, DGSA…RKSY, KLLD…LGDL, and KRVK…LKAH. Residues 34–43 show a composition bias toward polar residues; sequence QLNSVPNSGP. Composition is skewed to basic and acidic residues over residues 56-70, 79-117, 140-155, and 221-237; these read IKDK…KEPP, DGQE…DSRA, SQHR…LRFQ, and HLEV…DWKG. Composition is skewed to pro residues over residues 249–258 and 288–307; these read PPKPFINPVP and PPLP…PPPT. Residues 427–436 are compositionally biased toward basic and acidic residues; that stretch reads KLLDTRKLSR. Over residues 496 to 506 the composition is skewed to polar residues; sequence LSQSTESNSGK. S544 carries the post-translational modification Phosphoserine. In terms of domain architecture, uDENN spans 559-708; it reads EYFVVVSLHK…PFPALGKTII (150 aa). The region spanning 730 to 863 is the cDENN domain; that stretch reads RLEHVDFESL…LQVALEHILE (134 aa). One can recognise a dDENN domain in the interval 865-960; it reads RNDLACDQDG…QERELRRQDA (96 aa).

Its subcellular location is the cytoplasm. The protein localises to the cytoskeleton. Functionally, guanine nucleotide exchange factor (GEF) which may activate RAB9A and RAB9B. Promotes the exchange of GDP to GTP, converting inactive GDP-bound Rab proteins into their active GTP-bound form. May play a role in late endosomes back to trans-Golgi network/TGN transport. In Mus musculus (Mouse), this protein is DENN domain-containing protein 2A (Dennd2a).